Consider the following 103-residue polypeptide: Small ribosomal subunit protein uS10 (103 aa).

This sequence belongs to the universal ribosomal protein uS10 family. Part of the 30S ribosomal subunit.

Functionally, involved in the binding of tRNA to the ribosomes. This is Small ribosomal subunit protein uS10 from Rubrobacter xylanophilus (strain DSM 9941 / JCM 11954 / NBRC 16129 / PRD-1).